Consider the following 243-residue polypeptide: Probable transcriptional regulatory protein Smlt3713 (243 aa).

The protein belongs to the TACO1 family.

Its subcellular location is the cytoplasm. The sequence is that of Probable transcriptional regulatory protein Smlt3713 from Stenotrophomonas maltophilia (strain K279a).